The chain runs to 479 residues: 6-phosphogluconate dehydrogenase, decarboxylating (479 aa).

Residues 10 to 15 (GLAVMG), 33 to 35 (NRS), 75 to 77 (IKA), and N103 contribute to the NADP(+) site. Residues N103 and 129–131 (SGG) each bind substrate. K183 acts as the Proton acceptor in catalysis. 186–187 (HN) serves as a coordination point for substrate. E190 functions as the Proton donor in the catalytic mechanism. Y191, K260, R287, R447, and H453 together coordinate substrate.

It belongs to the 6-phosphogluconate dehydrogenase family. As to quaternary structure, homodimer.

It catalyses the reaction 6-phospho-D-gluconate + NADP(+) = D-ribulose 5-phosphate + CO2 + NADPH. It functions in the pathway carbohydrate degradation; pentose phosphate pathway; D-ribulose 5-phosphate from D-glucose 6-phosphate (oxidative stage): step 3/3. In terms of biological role, catalyzes the oxidative decarboxylation of 6-phosphogluconate to ribulose 5-phosphate and CO(2), with concomitant reduction of NADP to NADPH. This is 6-phosphogluconate dehydrogenase, decarboxylating (gnd) from Chlamydia muridarum (strain MoPn / Nigg).